We begin with the raw amino-acid sequence, 209 residues long: Kunitz trypsin inhibitor 1 (209 aa).

Residues 1–22 form the signal peptide; it reads MKATISITTIFLVVALAAPSLA. 2 disulfide bridges follow: cysteine 63/cysteine 107 and cysteine 154/cysteine 162. An N-linked (GlcNAc...) asparagine glycan is attached at asparagine 156.

This sequence belongs to the protease inhibitor I3 (leguminous Kunitz-type inhibitor) family.

Functionally, exhibits Kunitz trypsin protease inhibitor activity. The chain is Kunitz trypsin inhibitor 1 from Arabidopsis thaliana (Mouse-ear cress).